The primary structure comprises 199 residues: Peptidyl-tRNA hydrolase (199 aa).

Y18 contacts tRNA. The active-site Proton acceptor is the H23. TRNA-binding residues include Y72, N74, and N120.

This sequence belongs to the PTH family. Monomer.

It is found in the cytoplasm. The catalysed reaction is an N-acyl-L-alpha-aminoacyl-tRNA + H2O = an N-acyl-L-amino acid + a tRNA + H(+). Hydrolyzes ribosome-free peptidyl-tRNAs (with 1 or more amino acids incorporated), which drop off the ribosome during protein synthesis, or as a result of ribosome stalling. Functionally, catalyzes the release of premature peptidyl moieties from peptidyl-tRNA molecules trapped in stalled 50S ribosomal subunits, and thus maintains levels of free tRNAs and 50S ribosomes. This Bifidobacterium longum (strain DJO10A) protein is Peptidyl-tRNA hydrolase.